The sequence spans 218 residues: Probable transaldolase (218 aa).

Lys87 serves as the catalytic Schiff-base intermediate with substrate.

The protein belongs to the transaldolase family. Type 3B subfamily.

Its subcellular location is the cytoplasm. It carries out the reaction D-sedoheptulose 7-phosphate + D-glyceraldehyde 3-phosphate = D-erythrose 4-phosphate + beta-D-fructose 6-phosphate. Its pathway is carbohydrate degradation; pentose phosphate pathway; D-glyceraldehyde 3-phosphate and beta-D-fructose 6-phosphate from D-ribose 5-phosphate and D-xylulose 5-phosphate (non-oxidative stage): step 2/3. Its function is as follows. Transaldolase is important for the balance of metabolites in the pentose-phosphate pathway. This is Probable transaldolase from Cytophaga hutchinsonii (strain ATCC 33406 / DSM 1761 / CIP 103989 / NBRC 15051 / NCIMB 9469 / D465).